A 437-amino-acid polypeptide reads, in one-letter code: Phosphomethylpyrimidine synthase (437 aa).

Substrate-binding positions include N69, M98, Y127, H163, 185-187, 226-229, and E265; these read SRG and DACR. H269 contributes to the Zn(2+) binding site. Substrate is bound at residue Y292. H333 lines the Zn(2+) pocket. Residues C409, C412, and C416 each coordinate [4Fe-4S] cluster.

It belongs to the ThiC family. [4Fe-4S] cluster is required as a cofactor.

The enzyme catalyses 5-amino-1-(5-phospho-beta-D-ribosyl)imidazole + S-adenosyl-L-methionine = 4-amino-2-methyl-5-(phosphooxymethyl)pyrimidine + CO + 5'-deoxyadenosine + formate + L-methionine + 3 H(+). The protein operates within cofactor biosynthesis; thiamine diphosphate biosynthesis. Its function is as follows. Catalyzes the synthesis of the hydroxymethylpyrimidine phosphate (HMP-P) moiety of thiamine from aminoimidazole ribotide (AIR) in a radical S-adenosyl-L-methionine (SAM)-dependent reaction. This is Phosphomethylpyrimidine synthase from Clostridium botulinum (strain Kyoto / Type A2).